The primary structure comprises 320 residues: Protoheme IX farnesyltransferase (320 aa).

The next 9 membrane-spanning stretches (helical) occupy residues 38–58 (VIELLLVSTLPTMIFAQRGFP), 60–80 (IGLILATLVGGAFAAGSAGVF), 109–129 (EALVFAWILGAASIAILWFGA), 132–152 (LSAWLGLGAIVFYVVIYTMIL), 159–179 (NIVWGGAAGCFPVLIAWAAVT), 184–204 (WPAIVLFMVIFLWTPPHYWPL), 222–242 (AIAGAKVVSVQVVLYAWAMVA), 254–276 (GWVYTIAAVAAGAWFLYESHALY), and 299–319 (YLTLLFIALAVDPFVGSAIVG).

The protein belongs to the UbiA prenyltransferase family. Protoheme IX farnesyltransferase subfamily.

Its subcellular location is the cell membrane. It catalyses the reaction heme b + (2E,6E)-farnesyl diphosphate + H2O = Fe(II)-heme o + diphosphate. It participates in porphyrin-containing compound metabolism; heme O biosynthesis; heme O from protoheme: step 1/1. Functionally, converts heme B (protoheme IX) to heme O by substitution of the vinyl group on carbon 2 of heme B porphyrin ring with a hydroxyethyl farnesyl side group. This Paenarthrobacter aurescens (strain TC1) protein is Protoheme IX farnesyltransferase.